A 511-amino-acid polypeptide reads, in one-letter code: GMP synthase [glutamine-hydrolyzing] (511 aa).

Residues 6-196 enclose the Glutamine amidotransferase type-1 domain; the sequence is LVLVLDFGSQ…VFDVCGCTGD (191 aa). Catalysis depends on Cys-83, which acts as the Nucleophile. Active-site residues include His-170 and Glu-172. Residues 197–386 enclose the GMPS ATP-PPase domain; it reads WSIENFIDME…LGVPDRIVWR (190 aa). Position 224-230 (224-230) interacts with ATP; the sequence is SGGVDSS.

As to quaternary structure, homodimer.

It catalyses the reaction XMP + L-glutamine + ATP + H2O = GMP + L-glutamate + AMP + diphosphate + 2 H(+). Its pathway is purine metabolism; GMP biosynthesis; GMP from XMP (L-Gln route): step 1/1. Catalyzes the synthesis of GMP from XMP. This Oceanobacillus iheyensis (strain DSM 14371 / CIP 107618 / JCM 11309 / KCTC 3954 / HTE831) protein is GMP synthase [glutamine-hydrolyzing].